Reading from the N-terminus, the 406-residue chain is Arginine deiminase (406 aa).

C396 (amidino-cysteine intermediate) is an active-site residue.

Belongs to the arginine deiminase family.

It is found in the cytoplasm. It catalyses the reaction L-arginine + H2O = L-citrulline + NH4(+). It participates in amino-acid degradation; L-arginine degradation via ADI pathway; carbamoyl phosphate from L-arginine: step 1/2. The protein is Arginine deiminase of Salmonella typhimurium (strain LT2 / SGSC1412 / ATCC 700720).